Reading from the N-terminus, the 314-residue chain is Zinc transporter ZIP3 (314 aa).

Residues 1-3 (MVK) lie on the Extracellular side of the membrane. The helical transmembrane segment at 4–24 (LLVAKILCMVGMFFFMLLGSL) threads the bilayer. The Cytoplasmic portion of the chain corresponds to 25–42 (LPVKIIEMDFEKAHRSKK). Residues 43 to 63 (ILSLCNTFGGGVFLATCFNAL) traverse the membrane as a helical segment. At 64 to 85 (LPAVREKLKEVLTLAHISTDYP) the chain is on the extracellular side. The chain crosses the membrane as a helical span at residues 86-106 (LAETIMLLGFFMTVFLEQLVL). At 107–169 (TFRKERPAFI…QELSRSSPLR (63 aa)) the chain is on the cytoplasmic side. Serine 125 and serine 129 each carry phosphoserine. Residues 170–190 (LLSLVFALSAHSVFEGLALGL) form a helical membrane-spanning segment. Over 191–196 (QEEGEK) the chain is Extracellular. Residues 197–217 (VVSLFVGVAIHETLVAVALGI) traverse the membrane as a helical segment. The Cytoplasmic portion of the chain corresponds to 218–229 (NMARSAMALRDA). The chain crosses the membrane as a helical span at residues 230-250 (AKLAVTVSAMIPLGISLGLGI). Topologically, residues 251–262 (DSAQGMPSSVAS) are extracellular. The chain crosses the membrane as a helical span at residues 263–283 (VLLQGLAGGTFLFVTFFEILA). The Cytoplasmic segment spans residues 284-292 (KELEEKSDR). A helical transmembrane segment spans residues 293–313 (LLKVLFLVLGYTVLAGMVFIK). Residue tryptophan 314 is a topological domain, extracellular.

The protein belongs to the ZIP transporter (TC 2.A.5) family.

The protein localises to the cell membrane. The protein resides in the apical cell membrane. It carries out the reaction Zn(2+)(in) = Zn(2+)(out). In terms of biological role, transporter for the divalent cation Zn(2+). Mediates the influx of Zn(2+) into cells from extracellular space. Controls Zn(2+) accumulation into dentate gyrus granule cells in the hippocampus. Mediates Zn(2+) reuptake from the secreted milk within the alveolar lumen. The protein is Zinc transporter ZIP3 (SLC39A3) of Bos taurus (Bovine).